We begin with the raw amino-acid sequence, 402 residues long: UDP-N-acetylmuramoylalanine--D-glutamate ligase (402 aa).

97–103 contacts ATP; it reads GTNGKTT.

The protein belongs to the MurCDEF family.

It localises to the cytoplasm. The catalysed reaction is UDP-N-acetyl-alpha-D-muramoyl-L-alanine + D-glutamate + ATP = UDP-N-acetyl-alpha-D-muramoyl-L-alanyl-D-glutamate + ADP + phosphate + H(+). It participates in cell wall biogenesis; peptidoglycan biosynthesis. In terms of biological role, cell wall formation. Catalyzes the addition of glutamate to the nucleotide precursor UDP-N-acetylmuramoyl-L-alanine (UMA). This chain is UDP-N-acetylmuramoylalanine--D-glutamate ligase, found in Campylobacter jejuni subsp. jejuni serotype O:23/36 (strain 81-176).